A 125-amino-acid chain; its full sequence is UPF0325 protein Ping_0715 (125 aa).

Belongs to the UPF0325 family.

In Psychromonas ingrahamii (strain DSM 17664 / CCUG 51855 / 37), this protein is UPF0325 protein Ping_0715.